A 104-amino-acid polypeptide reads, in one-letter code: Large ribosomal subunit protein uL24 (104 aa).

Belongs to the universal ribosomal protein uL24 family. Part of the 50S ribosomal subunit.

Functionally, one of two assembly initiator proteins, it binds directly to the 5'-end of the 23S rRNA, where it nucleates assembly of the 50S subunit. Its function is as follows. One of the proteins that surrounds the polypeptide exit tunnel on the outside of the subunit. The polypeptide is Large ribosomal subunit protein uL24 (Bartonella henselae (strain ATCC 49882 / DSM 28221 / CCUG 30454 / Houston 1) (Rochalimaea henselae)).